The following is an 868-amino-acid chain: MISSVFRKIFGTKNDREVKKYIKRVAQINALEPTYEKMSDDELKIKFNELKAQVVEEKVTLDQILNDVFALVREASKRVLKMRHFDVQLIGGMVLNEGRIAEMKTGEGKTLVATLPVILNAMSGKGVHVVTVNDYLAKRDATQMGELYNFLGLSVDVILSGGYDDEVRQAAYNADITYGTNSEFGFDYLRDNMKFEAGQKVQRGHNFVIVDEVDSILIDEARTPLIISGPTNRTLDGYIRADQVAKQLTRGTPADPNMPGSKPTGDFIVDEKNRTIMITEAGISKAEKLFGVENLYNLENAVLSHHLDQALKAHNLFEKDVHYVVKDGEVVIVDEFTGRLSEGRRFSEGLHQALEAKEGVKIQEESQTLADTTYQNYFRMYKKLAGMTGTAQTEATEFSQIYNLEVISIPTNVPVKRIDQNDLIYKTQNEKFKAVIDEVKKAHEKGQPVLVGTASIERSEVLHEMLKKAGIPHSVLNAKNHEKEAEIIAQAGVKGAVTIATNMAGRGVDIRINDEVRDLGGLYIIGTERHESRRIDNQLRGRAGRQGDPGMSRFYLSLEDNLLRIFGSDRIKAIMDRLGIDEGESIESRMVTRAVENAQKKVESLHFEARKHLLEYDDVANEQRKTIYKYRDELLDKNYDMSEKIAQNRVEYATNLLDTAEIFHGGLKDDYDIKNLCSIILADCGEEIDESELKGLEYNELVEKIAQILEVRYNEKMSVLNEEQRKDIEKILYLQVLDNAWREHLYQMDILKTGIGLRGYNQKDPLVEYKKESYNLFMELVGRLKTESVKTLQIVRFKSREEQEEQARMMLEASQNAENEPLNYNNQGEDENFTPEKKIPRNAPCPCGSGKKYKDCHGKSGPKKGIFA.

ATP contacts are provided by residues Gln-88, 106–110 (GEGKT), and Asp-509. The segment covering 816 to 827 (NAENEPLNYNNQ) has biased composition (polar residues). Residues 816 to 868 (NAENEPLNYNNQGEDENFTPEKKIPRNAPCPCGSGKKYKDCHGKSGPKKGIFA) are disordered. The Zn(2+) site is built by Cys-845, Cys-847, Cys-856, and His-857.

Belongs to the SecA family. In terms of assembly, monomer and homodimer. Part of the essential Sec protein translocation apparatus which comprises SecA, SecYEG and auxiliary proteins SecDF-YajC and YidC. The cofactor is Zn(2+).

Its subcellular location is the cell inner membrane. It localises to the cytoplasm. It catalyses the reaction ATP + H2O + cellular proteinSide 1 = ADP + phosphate + cellular proteinSide 2.. Part of the Sec protein translocase complex. Interacts with the SecYEG preprotein conducting channel. Has a central role in coupling the hydrolysis of ATP to the transfer of proteins into and across the cell membrane, serving as an ATP-driven molecular motor driving the stepwise translocation of polypeptide chains across the membrane. This Campylobacter concisus (strain 13826) protein is Protein translocase subunit SecA.